The primary structure comprises 370 residues: Ubiquitin carboxyl-terminal hydrolase 12-B (370 aa).

The region spanning 39–369 is the USP domain; that stretch reads FGLVNFGNTC…SGYILFYQSR (331 aa). Cysteine 48 acts as the Nucleophile in catalysis. The interval 145–168 is disordered; the sequence is KQEKQNGRIPNGNIDNENNNNTPD. The segment covering 155–165 has biased composition (low complexity); sequence NGNIDNENNNN. 4 residues coordinate Zn(2+): cysteine 186, cysteine 189, cysteine 233, and cysteine 236. Catalysis depends on histidine 317, which acts as the Proton acceptor.

It belongs to the peptidase C19 family. USP12/USP46 subfamily. In terms of assembly, interacts with WDR48.

It carries out the reaction Thiol-dependent hydrolysis of ester, thioester, amide, peptide and isopeptide bonds formed by the C-terminal Gly of ubiquitin (a 76-residue protein attached to proteins as an intracellular targeting signal).. In terms of biological role, deubiquitinating enzyme. Has almost no deubiquitinating activity by itself and requires the interaction with wdr48 to have a high activity. The sequence is that of Ubiquitin carboxyl-terminal hydrolase 12-B (usp12-b) from Xenopus laevis (African clawed frog).